Reading from the N-terminus, the 380-residue chain is Cytochrome b (380 aa).

4 helical membrane passes run Phe-34–Ala-54, Trp-78–Val-99, Trp-114–Leu-134, and Phe-179–Thr-199. Residues His-84 and His-98 each coordinate heme b. Positions 183 and 197 each coordinate heme b. His-202 is an a ubiquinone binding site. 4 helical membrane-spanning segments follow: residues Leu-227 to Ser-247, Leu-289 to His-309, Leu-321 to Ser-341, and Phe-348 to Pro-368.

The protein belongs to the cytochrome b family. As to quaternary structure, the cytochrome bc1 complex contains 11 subunits: 3 respiratory subunits (MT-CYB, CYC1 and UQCRFS1), 2 core proteins (UQCRC1 and UQCRC2) and 6 low-molecular weight proteins (UQCRH/QCR6, UQCRB/QCR7, UQCRQ/QCR8, UQCR10/QCR9, UQCR11/QCR10 and a cleavage product of UQCRFS1). This cytochrome bc1 complex then forms a dimer. The cofactor is heme b.

The protein localises to the mitochondrion inner membrane. Functionally, component of the ubiquinol-cytochrome c reductase complex (complex III or cytochrome b-c1 complex) that is part of the mitochondrial respiratory chain. The b-c1 complex mediates electron transfer from ubiquinol to cytochrome c. Contributes to the generation of a proton gradient across the mitochondrial membrane that is then used for ATP synthesis. This Balearica pavonina (Black crowned-crane) protein is Cytochrome b (MT-CYB).